Reading from the N-terminus, the 107-residue chain is Integration host factor subunit beta (107 aa).

Positions 82-101 (PGKELRERVDRRAGEPLKAE) are enriched in basic and acidic residues. A disordered region spans residues 82 to 107 (PGKELRERVDRRAGEPLKAEEPDDDL).

This sequence belongs to the bacterial histone-like protein family. As to quaternary structure, heterodimer of an alpha and a beta chain.

This protein is one of the two subunits of integration host factor, a specific DNA-binding protein that functions in genetic recombination as well as in transcriptional and translational control. This Paraburkholderia phytofirmans (strain DSM 17436 / LMG 22146 / PsJN) (Burkholderia phytofirmans) protein is Integration host factor subunit beta.